Here is a 528-residue protein sequence, read N- to C-terminus: MRLFTTIAGLNCYLNLLRNEQKKSPDTIGLVPTMGALHKGHLSLIKRAREENTITVVSIFINPLQFAPREDFKEYPRQLEIDKEFCEKEGVDVIFAPTPETMGMKNALSTDAQDSTTTVVSPSHMTSIMCGVSRPNFFQGVATIVTKLLNIVKPNNAYFGQKDAQQLAIIKQLVKDLSLPVNIVYCPIIREASGLAISSRNQYLTPEQKEQASMLYASLCYGRKIFLENQDTPNILETVENAVKEKLASQPVLKLEYLEIVDPETLKPLENIQNIGLLAIAAYIGSCRLIDNILLRNRKPIIAIDGPAGAGKSTVTKLVGQSLGLLYLDTGAMYRAVTWMVLQSGVPVTDQAQVAELVSQCQISFNSPENNHVVINGQDVTVAIRSREVTNNVSIVAAQPTVRYFMVKQQQQFGAKGGIVAEGRDIGSHVFPNAELKIFLTASLKERSRRRLVELKQKGQTNISLEEVEKEIICRDQKDTNRKISPLRKSSDAVEISTDGLSIGEVTQKIVDIFKTTCYGKSSVNNII.

A pantoate--beta-alanine ligase region spans residues 1–293 (MRLFTTIAGL…IGSCRLIDNI (293 aa)). 34–41 (MGALHKGH) provides a ligand contact to ATP. Residue His-41 is the Proton donor of the active site. Gln-65 contacts (R)-pantoate. Gln-65 provides a ligand contact to beta-alanine. 160–163 (GQKD) serves as a coordination point for ATP. Gln-166 lines the (R)-pantoate pocket. Residues Ile-189 and 197–200 (ISSR) each bind ATP. The interval 294–528 (LLRNRKPIIA…YGKSSVNNII (235 aa)) is cytidylate kinase.

This sequence in the N-terminal section; belongs to the pantothenate synthetase family. It in the C-terminal section; belongs to the cytidylate kinase family. Type 1 subfamily.

The protein localises to the cytoplasm. The enzyme catalyses (R)-pantoate + beta-alanine + ATP = (R)-pantothenate + AMP + diphosphate + H(+). It carries out the reaction CMP + ATP = CDP + ADP. The catalysed reaction is dCMP + ATP = dCDP + ADP. It participates in cofactor biosynthesis; (R)-pantothenate biosynthesis; (R)-pantothenate from (R)-pantoate and beta-alanine: step 1/1. In terms of biological role, catalyzes the condensation of pantoate with beta-alanine in an ATP-dependent reaction via a pantoyl-adenylate intermediate. Functionally, catalyzes the transfer of a phosphate group from ATP to either CMP or dCMP to form CDP or dCDP and ADP, respectively. In Trichodesmium erythraeum (strain IMS101), this protein is Bifunctional pantoate ligase/cytidylate kinase.